A 150-amino-acid chain; its full sequence is 5-hydroxytryptamine receptor 1B (150 aa).

Topologically, residues 1–83 are extracellular; it reads VEARSRILKQ…AARERKATKT (83 aa). Residues 27 to 40 show a composition bias toward polar residues; the sequence is DSPGSTSSVTSINS. Positions 27-50 are disordered; sequence DSPGSTSSVTSINSRAPDLPSESG. Residues 84-105 traverse the membrane as a helical segment; sequence LGIILGAFIVCWLPFFIISLAM. The Cytoplasmic segment spans residues 106 to 115; sequence PICKDACWFH. Residues 116 to 138 traverse the membrane as a helical segment; the sequence is LAIFDFFTWLGYLNSLINPIIYT. An NPxxY motif; important for ligand-induced conformation changes and signaling motif is present at residues 133-137; it reads NPIIY. The Extracellular portion of the chain corresponds to 139 to 150; it reads MFNEDFKQAFHK.

Belongs to the G-protein coupled receptor 1 family. Homodimer. Heterodimer with HTR1D. Post-translationally, phosphorylated. Desensitization of the receptor may be mediated by its phosphorylation. In terms of processing, palmitoylated.

The protein resides in the cell membrane. In terms of biological role, G-protein coupled receptor for 5-hydroxytryptamine (serotonin). Also functions as a receptor for ergot alkaloid derivatives, various anxiolytic and antidepressant drugs and other psychoactive substances, such as lysergic acid diethylamide (LSD). Ligand binding causes a conformation change that triggers signaling via guanine nucleotide-binding proteins (G proteins) and modulates the activity of downstream effectors, such as adenylate cyclase. HTR1B is coupled to G(i)/G(o) G alpha proteins and mediates inhibitory neurotransmission by inhibiting adenylate cyclase activity. Arrestin family members inhibit signaling via G proteins and mediate activation of alternative signaling pathways. Regulates the release of 5-hydroxytryptamine, dopamine and acetylcholine in the brain, and thereby affects neural activity, nociceptive processing, pain perception, mood and behavior. Besides, plays a role in vasoconstriction of cerebral arteries. The sequence is that of 5-hydroxytryptamine receptor 1B (HTR1B) from Sus scrofa (Pig).